A 321-amino-acid polypeptide reads, in one-letter code: Tetraacyldisaccharide 4'-kinase (321 aa).

54-61 (SVGGTGKT) is an ATP binding site.

It belongs to the LpxK family.

The catalysed reaction is a lipid A disaccharide + ATP = a lipid IVA + ADP + H(+). It functions in the pathway glycolipid biosynthesis; lipid IV(A) biosynthesis; lipid IV(A) from (3R)-3-hydroxytetradecanoyl-[acyl-carrier-protein] and UDP-N-acetyl-alpha-D-glucosamine: step 6/6. Functionally, transfers the gamma-phosphate of ATP to the 4'-position of a tetraacyldisaccharide 1-phosphate intermediate (termed DS-1-P) to form tetraacyldisaccharide 1,4'-bis-phosphate (lipid IVA). The protein is Tetraacyldisaccharide 4'-kinase of Rickettsia typhi (strain ATCC VR-144 / Wilmington).